We begin with the raw amino-acid sequence, 538 residues long: Ubiquitin domain-containing protein DSK2a (538 aa).

One can recognise a Ubiquitin-like domain in the interval 18 to 93 (VAVNVRCSNG…VHMVRGFVPS (76 aa)). The tract at residues 95-120 (PSAPAANAGNQTTAPQAVGSNDSSNL) is disordered. The span at 102-119 (AGNQTTAPQAVGSNDSSN) shows a compositional bias: polar residues. STI1 domains lie at 138 to 179 (GNAM…QNLM) and 192 to 231 (NPQM…MREM). A disordered region spans residues 289–316 (QGVTTQGSDTSNNISAPNAETGTPNANP). STI1 domains lie at 357–394 (SPLG…MNQL) and 398–433 (NPQL…MQQM). One can recognise a UBA domain in the interval 491–535 (PPEERFATQLQQLQEMGFYDRAENIRALLATNGNVNAAVERLLGS).

Interacts with 'Lys-48'-linked polyubiquitin chains via its UBA domain. Interacts with RPN10 and RPN13. Interacts with PEX2 and PEX12. As to expression, ubiquitous with a strong expression level in inflorescence.

Its subcellular location is the nucleus. It is found in the cytoplasm. Functionally, binds and presumably selects ubiquitin-conjugates for destruction. Prefers multiubiquitin chains rather than single ubiquitins, with a binding affinity for 'Lys-48'-linked ubiquitin chains. Acts as a ubiquitin receptor that associates with the 26S proteasomal docking subunit RPN10 for the indirect recognition of ubiquitinated substrates of ubiquitin/26S proteasome-mediated proteolysis (UPP). The sequence is that of Ubiquitin domain-containing protein DSK2a (DSK2A) from Arabidopsis thaliana (Mouse-ear cress).